The following is a 366-amino-acid chain: Chorismate synthase (366 aa).

Residues arginine 48 and arginine 54 each contribute to the NADP(+) site. FMN contacts are provided by residues 125–127 (RSS), 238–239 (NA), glycine 278, 293–297 (KPTSS), and arginine 319.

It belongs to the chorismate synthase family. In terms of assembly, homotetramer. FMNH2 serves as cofactor.

The enzyme catalyses 5-O-(1-carboxyvinyl)-3-phosphoshikimate = chorismate + phosphate. It functions in the pathway metabolic intermediate biosynthesis; chorismate biosynthesis; chorismate from D-erythrose 4-phosphate and phosphoenolpyruvate: step 7/7. Catalyzes the anti-1,4-elimination of the C-3 phosphate and the C-6 proR hydrogen from 5-enolpyruvylshikimate-3-phosphate (EPSP) to yield chorismate, which is the branch point compound that serves as the starting substrate for the three terminal pathways of aromatic amino acid biosynthesis. This reaction introduces a second double bond into the aromatic ring system. The protein is Chorismate synthase of Burkholderia orbicola (strain MC0-3).